Reading from the N-terminus, the 403-residue chain is Histidine--tRNA ligase (403 aa).

Belongs to the class-II aminoacyl-tRNA synthetase family. As to quaternary structure, homodimer.

It is found in the cytoplasm. It catalyses the reaction tRNA(His) + L-histidine + ATP = L-histidyl-tRNA(His) + AMP + diphosphate + H(+). This Sulfurovum sp. (strain NBC37-1) protein is Histidine--tRNA ligase.